The primary structure comprises 572 residues: Urease subunit alpha (572 aa).

The region spanning 134-572 (AGIDSHIHLI…AAMNQRYFFG (439 aa)) is the Urease domain. Ni(2+)-binding residues include histidine 139, histidine 141, and lysine 222. The residue at position 222 (lysine 222) is an N6-carboxylysine. Histidine 224 serves as a coordination point for substrate. Positions 251 and 277 each coordinate Ni(2+). The active-site Proton donor is the histidine 325. Ni(2+) is bound at residue aspartate 365.

Belongs to the metallo-dependent hydrolases superfamily. Urease alpha subunit family. Heterotrimer of UreA (gamma), UreB (beta) and UreC (alpha) subunits. Three heterotrimers associate to form the active enzyme. It depends on Ni cation as a cofactor. In terms of processing, carboxylation allows a single lysine to coordinate two nickel ions.

Its subcellular location is the cytoplasm. It catalyses the reaction urea + 2 H2O + H(+) = hydrogencarbonate + 2 NH4(+). Its pathway is nitrogen metabolism; urea degradation; CO(2) and NH(3) from urea (urease route): step 1/1. This Yersinia enterocolitica serotype O:8 / biotype 1B (strain NCTC 13174 / 8081) protein is Urease subunit alpha.